The sequence spans 273 residues: Testis-specific serine/threonine-protein kinase 6 (273 aa).

Residues 12–267 (YKLGRTIGEG…AGQVARNGWL (256 aa)) enclose the Protein kinase domain. Residues 18–26 (IGEGSYSKV) and lysine 41 each bind ATP. Aspartate 135 functions as the Proton acceptor in the catalytic mechanism.

This sequence belongs to the protein kinase superfamily. CAMK Ser/Thr protein kinase family. As to quaternary structure, microtubule inner protein component of sperm flagellar doublet microtubules. Interacts with HSP90; this interaction stabilizes and activates TSSK6. Interacts with the heat shock proteins HSPCB, HSPA8 and HSPA1A. These interactions appear to be required for TSSK6 kinase activity. Interacts with TSACC; this interaction is direct and recruits TSACC to HSP90, which is essential for kinase activity. Requires Mg(2+) as cofactor. Autophosphorylated. In terms of processing, ubiquitinated; HSP90 activity negatively regulates ubiquitination and degradation. As to expression, expressed in the testis, localized to the heads of elongating spermatids.

The protein localises to the cytoplasm. Its subcellular location is the cytoskeleton. It localises to the flagellum axoneme. The protein resides in the nucleus. The enzyme catalyses L-seryl-[protein] + ATP = O-phospho-L-seryl-[protein] + ADP + H(+). It carries out the reaction L-threonyl-[protein] + ATP = O-phospho-L-threonyl-[protein] + ADP + H(+). In terms of biological role, serine/threonine-protein kinase component of the sperm flagellar doublet microtubules. May act as a regulator of sperm motility by mediating phosphorylation of sperm doublet microtubule proteins. Plays a role in DNA condensation during postmeiotic chromatin remodeling and histone-to-protamine transition during spermatogenesis. In Mus musculus (Mouse), this protein is Testis-specific serine/threonine-protein kinase 6.